The following is a 956-amino-acid chain: MIKKYFDPLRMEKSLYEFWEKNGYFKPQNNKGKPNFCIVMPPPNITGNLHIGHAFQQTIMDILIRYNRMIGKNTFWQVGTDHAGIATQIVVEKKILKEENKTVQQLGKKEFLERIWKWKNTSKNVITSQMRRLGISVDWTHEKFTLDPQISFAVRKVFMTLYDECLIYKRKKLVNWDPVLKTVISDLEVKNRNVIGNMWYIKYYLVKNHSIKISQEYYLVIATTRPETLFGDTAIAVHPNDSRYKKYIGCYALVPIINRIIPIISDEFVDVNKGTGCVKITPAHDFNDYEIAMRHNLSIINVFTRNGKITDVIEEYDISGEKSCIYKQNVPLRFHHLDRFIARKIIVKELIALKLLIKIQKHNLAIPYGERSGSVIEPLLTDQWYLRVEPLAKIAVEAVKSGKIIFIPKKYEKIYYSWMNNIKDWCISRQLLWGHRMPIWYDKKNNIYVGLDEKHIREKYHISDDIFLIQETDVLDTWFSSSLWMFSSLGWPNNKDLFKNFYSTDVVVSGFDIIFFWIARMIMLSMHLIKDHNGNGRVPFKKVYITGLICDEHGKKMSKSKGNVVDPLDMIDGISLDALIQKRIKSTVFSTHSKKIITQIQSLYPNGINSSGVDALRFTCAALSTPTRYIKWNINRLYGYRNFCNKLWNASRFILMNLTHEVEPVKLILIKPMSLSDRWIVAEFHNLVKRYRTALDNYRFDIAANVLYEFVWNKFCDFYIELVKSFINSCSMLELKSTRCTLVYILDSVLRLAHPIIPFITEEIWQKLQVFVKKNDKNTIMLQSFPKYDVKLVNKTILEDMDWIKNIFIIIRSFRMDLKISHTTLISISFKNVSSKIHKLIEEHKDYIKKIAYLDNVSIILSNVDSMLFFKSYIVLGAELLIPYSKIFPKEKELKNLNKEISKIQLAINKLQQRLSNEEFIGKAPIHVVKKYKNQLQIYIEHKTQLCHKKLTMLRD.

A 'HIGH' region motif is present at residues 43-53; sequence PNITGNLHIGH. The short motif at 556 to 560 is the 'KMSKS' region element; that stretch reads KMSKS. Residue Lys-559 participates in ATP binding. The stretch at 889-920 forms a coiled coil; it reads PKEKELKNLNKEISKIQLAINKLQQRLSNEEF.

It belongs to the class-I aminoacyl-tRNA synthetase family. ValS type 1 subfamily. Monomer.

Its subcellular location is the cytoplasm. It catalyses the reaction tRNA(Val) + L-valine + ATP = L-valyl-tRNA(Val) + AMP + diphosphate. Functionally, catalyzes the attachment of valine to tRNA(Val). As ValRS can inadvertently accommodate and process structurally similar amino acids such as threonine, to avoid such errors, it has a 'posttransfer' editing activity that hydrolyzes mischarged Thr-tRNA(Val) in a tRNA-dependent manner. This Buchnera aphidicola subsp. Baizongia pistaciae (strain Bp) protein is Valine--tRNA ligase.